The sequence spans 154 residues: Protein X (154 aa).

Residues 68-117 (PCALRFTSARCMETTVNAPRNLPTVLHKRTLGLSAMSTTKIETYFKDCVF) form a mitochondrial targeting sequence region.

It belongs to the orthohepadnavirus protein X family. In terms of assembly, may form homodimer. May interact with host CEBPA, CFLAR, CREB1, DDB1, E4F1, HBXIP, HSPD1/HSP60, NFKBIA, POLR2E and SMAD4. Interacts with host SMC5-SMC6 complex and induces its degradation. Interacts with host TRPC4AP; leading to prevent ubiquitination of TRPC4AP. Interacts with host PLSCR1; this interaction promotes ubiquitination and degradation of HBx and impairs HBx-mediated cell proliferation. Post-translationally, a fraction may be phosphorylated in insect cells and HepG2 cells, a human hepatoblastoma cell line. Phosphorylated in vitro by host protein kinase C or mitogen-activated protein kinase. N-acetylated in insect cells.

It is found in the host cytoplasm. The protein resides in the host nucleus. It localises to the host mitochondrion. In terms of biological role, multifunctional protein that plays a role in silencing host antiviral defenses and promoting viral transcription. Does not seem to be essential for HBV infection. May be directly involved in development of cirrhosis and liver cancer (hepatocellular carcinoma). Most of cytosolic activities involve modulation of cytosolic calcium. The effect on apoptosis is controversial depending on the cell types in which the studies have been conducted. May induce apoptosis by localizing in mitochondria and causing loss of mitochondrial membrane potential. May also modulate apoptosis by binding host CFLAR, a key regulator of the death-inducing signaling complex (DISC). Promotes viral transcription by using the host E3 ubiquitin ligase DDB1 to target the SMC5-SMC6 complex to proteasomal degradation. This host complex would otherwise bind to viral episomal DNA, and prevents its transcription. Moderately stimulates transcription of many different viral and cellular transcription elements. Promoters and enhancers stimulated by HBx contain DNA binding sites for NF-kappa-B, AP-1, AP-2, c-EBP, ATF/CREB, or the calcium-activated factor NF-AT. In Gorilla gorilla (western gorilla), this protein is Protein X.